Consider the following 259-residue polypeptide: UPF0246 protein VSAL_I2547 (259 aa).

Belongs to the UPF0246 family.

The sequence is that of UPF0246 protein VSAL_I2547 from Aliivibrio salmonicida (strain LFI1238) (Vibrio salmonicida (strain LFI1238)).